Consider the following 409-residue polypeptide: Pleckstrin homology domain-containing family O member 1 (409 aa).

The segment at 1–20 (MMKKNNSTKRGPQDGNHQCA) is disordered. Residues 21–132 (PPEKVGWVRK…WINALNSAIT (112 aa)) form the PH domain. The segment at 133–193 (RAKNRVLDEV…MLTLDLIQEE (61 aa)) is interaction with capping proteins (CPs). Residues 136–308 (NRVLDEVTVE…PHAPGQLSRI (173 aa)) are interaction with ATM, CKIP, IFP35 and NMI. 3 disordered regions span residues 218 to 304 (LAGS…APGQ), 325 to 350 (EVQG…ESEQ), and 390 to 409 (TPDS…KSLM). Ser227 and Ser271 each carry phosphoserine. A negative regulator of AP-1 activity region spans residues 308 to 409 (IQDLVARKLE…QHSQYRKSLM (102 aa)). Over residues 331–340 (DGKRKAKEPP) the composition is skewed to basic and acidic residues. Ser342 carries the phosphoserine modification. Positions 390–402 (TPDSHLRQTTQHS) are enriched in polar residues.

Heterodimer or homodimer. Interacts with CK2 and actin capping subunits (capping protein CP-alpha and CP-beta). CKIP1 and CK2 together inhibit the activity of actin capping protein at the barbed ends of actin filaments. Interacts with ATM, IFP35, JUN, JUND, NMI and PI3K. Interacts with AKT1, AKT2 and AKT3 (each isozyme of PKB), PtdIns(3,5)P2, PtdIns(4,5)P2 and PtdIns(3,4,5)P2. In terms of processing, C-terminal fragments could be released during apoptosis via caspase-3-dependent cleavage.

It is found in the membrane. Its subcellular location is the nucleus. The protein resides in the cytoplasm. In terms of biological role, plays a role in the regulation of the actin cytoskeleton through its interactions with actin capping protein (CP). May function to target CK2 to the plasma membrane thereby serving as an adapter to facilitate the phosphorylation of CP by protein kinase 2 (CK2). Appears to target ATM to the plasma membrane. Also implicated in PI3K-regulated muscle differentiation, the regulation of AP-1 activity (plasma membrane bound AP-1 regulator that translocates to the nucleus) and the promotion of apoptosis induced by tumor necrosis factor TNF. When bound to PKB, it inhibits it probably by decreasing PKB level of phosphorylation. This is Pleckstrin homology domain-containing family O member 1 (PLEKHO1) from Bos taurus (Bovine).